Consider the following 418-residue polypeptide: NADH-quinone oxidoreductase subunit D (418 aa).

Belongs to the complex I 49 kDa subunit family. In terms of assembly, NDH-1 is composed of 14 different subunits. Subunits NuoB, C, D, E, F, and G constitute the peripheral sector of the complex.

The protein localises to the cell inner membrane. It catalyses the reaction a quinone + NADH + 5 H(+)(in) = a quinol + NAD(+) + 4 H(+)(out). NDH-1 shuttles electrons from NADH, via FMN and iron-sulfur (Fe-S) centers, to quinones in the respiratory chain. The immediate electron acceptor for the enzyme in this species is believed to be ubiquinone. Couples the redox reaction to proton translocation (for every two electrons transferred, four hydrogen ions are translocated across the cytoplasmic membrane), and thus conserves the redox energy in a proton gradient. In Neisseria meningitidis serogroup A / serotype 4A (strain DSM 15465 / Z2491), this protein is NADH-quinone oxidoreductase subunit D.